Reading from the N-terminus, the 450-residue chain is Protein tweety homolog 1 (450 aa).

At 1 to 43 (MGAPPGYRPSAWVHLLHQLPRADFQLRPVPSAFAPQEREYQQA) the chain is on the extracellular side. Residues 44–64 (LLLVAALAGLGLGLSLIFIAV) form a helical membrane-spanning segment. The Cytoplasmic portion of the chain corresponds to 65–88 (YLIRFCCCRPPEPPGAKSPPPGGG). The chain crosses the membrane as a helical span at residues 89–109 (CVTWNCIAALLVGCAGIGVGF). At 110–214 (YGNSETSDGV…DVSFVEEYRW (105 aa)) the chain is on the extracellular side. An N-linked (GlcNAc...) asparagine glycan is attached at Asn130. The chain crosses the membrane as a helical span at residues 215–235 (LAYVLLLLLELLVCLFTLLGL). At 236–240 (ARQSK) the chain is on the cytoplasmic side. Residues 241–261 (WLVIVMTVMSLLVLVLSWGSM) traverse the membrane as a helical segment. Residues 262–390 (GLEAATAVGL…LRGLCEDTLE (129 aa)) lie on the Extracellular side of the membrane. Intrachain disulfides connect Cys275–Cys385 and Cys303–Cys370. 2 N-linked (GlcNAc...) asparagine glycosylation sites follow: Asn284 and Asn355. The chain crosses the membrane as a helical span at residues 391-411 (GLLFLLLFSLLSAGALATVLC). The Cytoplasmic portion of the chain corresponds to 412-450 (SLPRAWALFPPSDDYEDTDDDDPFNPQESKRFVQWQSSI). The segment at 427-450 (EDTDDDDPFNPQESKRFVQWQSSI) is disordered. Position 440 is a phosphoserine (Ser440).

It belongs to the tweety family. In terms of assembly, homotetramer; disulfide-linked. Homodimer. Post-translationally, N-glycosylated. Contains high-mannose, hybrid and complex oligosaccharides.

It is found in the cell membrane. It catalyses the reaction chloride(in) = chloride(out). It carries out the reaction L-glutamate(out) = L-glutamate(in). In terms of biological role, calcium-independent, swelling-dependent volume-regulated anion channel (VRAC-swell) which plays a pivotal role in the process of regulatory volume decrease (RVD) in the brain through the efflux of anions like chloride and organic osmolytes like glutamate. This is Protein tweety homolog 1 (TTYH1) from Bos taurus (Bovine).